The chain runs to 179 residues: 6,7-dimethyl-8-ribityllumazine synthase (179 aa).

5-amino-6-(D-ribitylamino)uracil-binding positions include tryptophan 13, 45-47 (AVE), and 68-70 (VVI). 73-74 (DT) serves as a coordination point for (2S)-2-hydroxy-3-oxobutyl phosphate. The active-site Proton donor is histidine 76. Phenylalanine 101 is a 5-amino-6-(D-ribitylamino)uracil binding site. Arginine 115 provides a ligand contact to (2S)-2-hydroxy-3-oxobutyl phosphate. Positions 157 to 179 (AKAAKKPAKAAAKTQKKKKKVRK) are disordered.

The protein belongs to the DMRL synthase family.

The enzyme catalyses (2S)-2-hydroxy-3-oxobutyl phosphate + 5-amino-6-(D-ribitylamino)uracil = 6,7-dimethyl-8-(1-D-ribityl)lumazine + phosphate + 2 H2O + H(+). The protein operates within cofactor biosynthesis; riboflavin biosynthesis; riboflavin from 2-hydroxy-3-oxobutyl phosphate and 5-amino-6-(D-ribitylamino)uracil: step 1/2. Functionally, catalyzes the formation of 6,7-dimethyl-8-ribityllumazine by condensation of 5-amino-6-(D-ribitylamino)uracil with 3,4-dihydroxy-2-butanone 4-phosphate. This is the penultimate step in the biosynthesis of riboflavin. The chain is 6,7-dimethyl-8-ribityllumazine synthase from Bdellovibrio bacteriovorus (strain ATCC 15356 / DSM 50701 / NCIMB 9529 / HD100).